The chain runs to 333 residues: 4-hydroxyproline 2-epimerase (333 aa).

Cys-90 acts as the Proton acceptor in catalysis. Residues 91-92 (GH), His-223, and Asp-249 contribute to the substrate site. Cys-253 functions as the Proton donor in the catalytic mechanism. Position 254-255 (254-255 (GT)) interacts with substrate.

This sequence belongs to the proline racemase family.

The catalysed reaction is trans-4-hydroxy-L-proline = cis-4-hydroxy-D-proline. Its function is as follows. Catalyzes the epimerization of trans-4-hydroxy-L-proline (t4LHyp) to cis-4-hydroxy-D-proline (c4DHyp). Is likely involved in a degradation pathway that converts t4LHyp to alpha-ketoglutarate. Displays no proline racemase activity. In Shewanella loihica (strain ATCC BAA-1088 / PV-4), this protein is 4-hydroxyproline 2-epimerase.